The primary structure comprises 233 residues: MTTTERPPPPPLSMSKKETPTLLDSISKKISTTETLQRLRNKNLTTLNKIKYDSELLLHYLYDDHHNKNSDYANNNINVIKISKVKVKKTGASILAHYFAQIHVSTGYSFEFHPGSQPRTFQTIHTDGLIIKVLILCDECCKKELRDYIKGENSFNVAFRNCESILCRRVSFQTVLLTCAILLLLFNVEKFSMINLLIILLILLSLFCHNNYIISNPYIEFCNHKSTNKKYDR.

Helical transmembrane passes span 171 to 191 (SFQT…VEKF) and 194 to 214 (INLL…NYII).

The protein resides in the host nucleus. It localises to the host membrane. Its subcellular location is the virion. In terms of biological role, plays an essential role in the assembly of nucleocapsids with envelopes. This chain is Protein AC81 (AC81), found in Autographa californica nuclear polyhedrosis virus (AcMNPV).